The sequence spans 610 residues: Glucoamylase ARB_02327-1 (610 aa).

An N-terminal signal peptide occupies residues 1 to 18 (MRVTSLLWSSLVIPAAVG). A propeptide spanning residues 19 to 24 (FQVRFK) is cleaved from the precursor. An N-linked (GlcNAc...) asparagine glycan is attached at Asn49. Residue Trp143 participates in substrate binding. Asn194 carries N-linked (GlcNAc...) asparagine glycosylation. Asp199 serves as the catalytic Proton acceptor. Residue Glu202 is the Proton donor of the active site. Disulfide bonds link Cys233/Cys236, Cys245/Cys472, and Cys285/Cys293. In terms of domain architecture, CBM20 spans 504-610 (TALPTKNNVR…SGAIKRDTWR (107 aa)).

It belongs to the glycosyl hydrolase 15 family.

It is found in the secreted. The enzyme catalyses Hydrolysis of terminal (1-&gt;4)-linked alpha-D-glucose residues successively from non-reducing ends of the chains with release of beta-D-glucose.. This chain is Glucoamylase ARB_02327-1, found in Arthroderma benhamiae (strain ATCC MYA-4681 / CBS 112371) (Trichophyton mentagrophytes).